Reading from the N-terminus, the 499-residue chain is Endoglucanase (499 aa).

The first 29 residues, 1–29 (MKRSISIFITCLLIAVLTMGGLLPSPASA), serve as a signal peptide directing secretion. Substrate-binding positions include His65, 69-70 (WY), Tyr96, and His131. The active-site Proton donor is Glu169. Residue Tyr231 coordinates substrate. Glu257 functions as the Nucleophile in the catalytic mechanism. Residues 263-264 (AS), Trp291, and 296-298 (KQE) each bind substrate. The span at 330 to 340 (RGTKDSTKDVP) shows a compositional bias: basic and acidic residues. Residues 330–353 (RGTKDSTKDVPETPAQDNPTQEKG) are disordered. Positions 350–499 (QEKGVSVQYK…GKLIWGTEPN (150 aa)) constitute a CBM3 domain.

It belongs to the glycosyl hydrolase 5 (cellulase A) family.

It carries out the reaction Endohydrolysis of (1-&gt;4)-beta-D-glucosidic linkages in cellulose, lichenin and cereal beta-D-glucans.. The polypeptide is Endoglucanase (bglC) (Bacillus subtilis).